We begin with the raw amino-acid sequence, 443 residues long: MSDMEDDFMCDDEEDYDLEYSEDSNSEPNVDLENQYYNSKALKEDDPKAALSSFQKVLELEGEKGEWGFKALKQMIKINFKLTNFPEMMNRYKQLLTYIRSAVTRNYSEKSINSILDYISTSKQMDLLQEFYETTLEALKDAKNDRLWFKTNTKLGKLYLEREEYGKLQKILRQLHQSCQTDDGEDDLKKGTQLLEIYALEIQMYTAQKNNKKLKALYEQSLHIKSAIPHPLIMGVIRECGGKMHLREGEFEKAHTDFFEAFKNYDESGSPRRTTCLKYLVLANMLMKSGINPFDSQEAKPYKNDPEILAMTNLVSAYQNNDITEFEKILKTNHSNIMDDPFIREHIEELLRNIRTQVLIKLIKPYTRIHIPFISKELNIDVADVESLLVQCILDNTIHGRIDQVNQLLELDHQKRGGARYTALDKWTNQLNSLNQAVVSKLA.

Residues 1–275 (MSDMEDDFMC…DESGSPRRTT (275 aa)) form a mediates interaction with NIF3L1 region. Positions 254 to 416 (AHTDFFEAFK…QLLELDHQKR (163 aa)) constitute a PCI domain.

The protein belongs to the CSN2 family. As to quaternary structure, component of the CSN complex, composed of COPS1/GPS1, COPS2, COPS3, COPS4, COPS5, COPS6, COPS7 (COPS7A or COPS7B), COPS8 and COPS9 isoform 1. In the complex, it probably interacts directly with COPS1, COPS4, COPS5, COPS6 and COPS7 (COPS7A or COPS7B). Specifically interacts with the ligand binding domain of the thyroid receptor (TR). Does not require the presence of thyroid hormone for its interaction. Interacts with CUL1 and CUL2. Interacts with IRF8/ICSBP1 and with nuclear receptors NR2F1 and NR0B1. Interacts with NIF3L1. Phosphorylated by CK2 and PKD kinases.

It is found in the cytoplasm. It localises to the nucleus. Functionally, essential component of the COP9 signalosome complex (CSN), a complex involved in various cellular and developmental processes. The CSN complex is an essential regulator of the ubiquitin (Ubl) conjugation pathway by mediating the deneddylation of the cullin subunits of SCF-type E3 ligase complexes, leading to decrease the Ubl ligase activity of SCF-type complexes such as SCF, CSA or DDB2. The complex is also involved in phosphorylation of p53/TP53, c-jun/JUN, IkappaBalpha/NFKBIA, ITPK1 and IRF8/ICSBP, possibly via its association with CK2 and PKD kinases. CSN-dependent phosphorylation of TP53 and JUN promotes and protects degradation by the Ubl system, respectively. Involved in early stage of neuronal differentiation via its interaction with NIF3L1. This is COP9 signalosome complex subunit 2 (COPS2) from Homo sapiens (Human).